Reading from the N-terminus, the 242-residue chain is Probable L-ribulose-5-phosphate 4-epimerase UlaF (242 aa).

Residues 31–32 (GN), 48–49 (SG), and 78–79 (SS) each bind substrate. Residues aspartate 80, histidine 99, and histidine 101 each contribute to the Zn(2+) site. The active-site Proton donor/acceptor is aspartate 124. Histidine 175 contributes to the Zn(2+) binding site. The active-site Proton donor/acceptor is the tyrosine 234.

The protein belongs to the aldolase class II family. AraD/FucA subfamily. Zn(2+) serves as cofactor.

It catalyses the reaction L-ribulose 5-phosphate = D-xylulose 5-phosphate. Its pathway is cofactor degradation; L-ascorbate degradation; D-xylulose 5-phosphate from L-ascorbate: step 4/4. Functionally, catalyzes the isomerization of L-ribulose 5-phosphate to D-xylulose 5-phosphate. Is involved in the anaerobic L-ascorbate utilization. In Mycoplasma pneumoniae (strain ATCC 29342 / M129 / Subtype 1) (Mycoplasmoides pneumoniae), this protein is Probable L-ribulose-5-phosphate 4-epimerase UlaF.